Reading from the N-terminus, the 563-residue chain is Tripeptidyl-peptidase 1 (563 aa).

An N-terminal signal peptide occupies residues 1 to 19 (MGLQARFLGLLALVIAGKC). Residues 20 to 195 (THSPEPDQRW…PEPQGVGPVG (176 aa)) constitute a propeptide, removed in mature form. Cys111 and Cys122 are joined by a disulfide. Residues 199–563 (GVTPSVLRQR…PALLKTLLNP (365 aa)) enclose the Peptidase S53 domain. Asn210 and Asn222 each carry an N-linked (GlcNAc...) asparagine glycan. Catalysis depends on charge relay system residues Glu272 and Asp276. N-linked (GlcNAc...) asparagine glycosylation is found at Asn286, Asn313, and Asn443. 2 disulfides stabilise this stretch: Cys365-Cys526 and Cys522-Cys537. The active-site Charge relay system is Ser475. 2 residues coordinate Ca(2+): Asp517 and Val518. The Ca(2+) site is built by Gly539, Gly541, and Asp543.

As to quaternary structure, monomer. Interacts with CLN5. Interacts with CLN3. Ca(2+) serves as cofactor. Activated by autocatalytic proteolytical processing upon acidification. N-glycosylation is required for processing and activity.

The protein localises to the lysosome. It localises to the melanosome. The enzyme catalyses Release of an N-terminal tripeptide from a polypeptide, but also has endopeptidase activity.. In terms of biological role, lysosomal serine protease with tripeptidyl-peptidase I activity. May act as a non-specific lysosomal peptidase which generates tripeptides from the breakdown products produced by lysosomal proteinases. Requires substrates with an unsubstituted N-terminus. The chain is Tripeptidyl-peptidase 1 (Tpp1) from Rattus norvegicus (Rat).